A 1473-amino-acid polypeptide reads, in one-letter code: DNA topoisomerase 2 (1473 aa).

Residues 1-20 (MATKLPLQNSNAANVAKAPA) are disordered. A compositionally biased stretch (low complexity) spans 9-20 (NSNAANVAKAPA). ATP-binding positions include Asn91, Asn120, 148–150 (SSN), and 161–168 (GRNGYGAK). Residues 345 to 347 (NKK) form an interaction with DNA region. 378-380 (QTK) contributes to the ATP binding site. In terms of domain architecture, Toprim spans 455–569 (CTLILTEGDS…SLLQVPSFLV (115 aa)). Positions 461, 538, and 540 each coordinate Mg(2+). Residues 704-1163 (IPSMVDGLKP…TPKSLWLSDL (460 aa)) enclose the Topo IIA-type catalytic domain. The active-site O-(5'-phospho-DNA)-tyrosine intermediate is the Tyr794. The segment at 980 to 989 (KLTTTIATSN) is interaction with DNA. 3 disordered regions span residues 1195-1230 (SGAAVKVKRQAPKKPAPKKTTKKASESETTEASYSA), 1242-1297 (KPKA…EVEE), and 1313-1473 (GSAP…EDDE). 2 stretches are compositionally biased toward basic residues: residues 1200 to 1216 (KVKRQAPKKPAPKKTTK) and 1278 to 1288 (PKGRQGAKKKA). Positions 1351-1360 (KPAATKAAKP) are enriched in low complexity. Composition is skewed to polar residues over residues 1394–1404 (SPFNKKSSSVM) and 1417–1427 (ENVAGNSSSEK). Acidic residues predominate over residues 1453-1473 (SESESANDSEFDDIEDDEDDE).

The protein belongs to the type II topoisomerase family. Homodimer. Requires Mg(2+) as cofactor. The cofactor is Mn(2+). Ca(2+) serves as cofactor.

The catalysed reaction is ATP-dependent breakage, passage and rejoining of double-stranded DNA.. Its function is as follows. Control of topological states of DNA by transient breakage and subsequent rejoining of DNA strands. Topoisomerase II makes double-strand breaks. The chain is DNA topoisomerase 2 (TOP2) from Arabidopsis thaliana (Mouse-ear cress).